Consider the following 1032-residue polypeptide: Protein translocase subunit SecA (1032 aa).

Residues glutamine 121, 139–143, and aspartate 570 each bind ATP; that span reads GEGKT. The tract at residues 945–975 is disordered; it reads TAGGSENATEDAPKPAKRGVGGAARRVSNAA. 4 residues coordinate Zn(2+): cysteine 994, cysteine 996, cysteine 1005, and histidine 1006.

This sequence belongs to the SecA family. In terms of assembly, monomer and homodimer. Part of the essential Sec protein translocation apparatus which comprises SecA, SecYEG and auxiliary proteins SecDF. Other proteins may also be involved. Requires Zn(2+) as cofactor.

It localises to the cell membrane. Its subcellular location is the cytoplasm. The enzyme catalyses ATP + H2O + cellular proteinSide 1 = ADP + phosphate + cellular proteinSide 2.. Functionally, part of the Sec protein translocase complex. Interacts with the SecYEG preprotein conducting channel. Has a central role in coupling the hydrolysis of ATP to the transfer of proteins into and across the cell membrane, serving as an ATP-driven molecular motor driving the stepwise translocation of polypeptide chains across the membrane. This is Protein translocase subunit SecA from Herpetosiphon aurantiacus (strain ATCC 23779 / DSM 785 / 114-95).